The following is a 394-amino-acid chain: MNKQSIRDIDVKGKRVFCRVDFNVPLKDGVIQDETRIQAALPTIKHLLDGGAKLVLASHLGRPKGEKKPEFSLAPVAKRLAELLGKDVPLVEEAYGPVAEEAVANLSEGDVVVLENVRFYPGETKNDPELAKGFAALADVYVNDAFGAAHRAHASTEGIAHHVDTAVAGLLMEKELEVLGKALSNPDRPFTAIIGGSKVADKIGVIDHLLDIVDTLIIGGGLSYTFSKALGHEVGTSLLEEDKLDLARQFMKKAEDKGVKFLMPVDCVITKEFGEETYVGPVDIDSIPADHMGLDIGPKTVELYADAIRESKLVVWNGPMGVFELDKYANGTKGVAQALADSDAYSIIGGGDSAAAAAKFGLADKMSHISTGGGASLEFMEGKKLPGVEALNDK.

Substrate-binding positions include 21-23, R36, 59-62, R118, and R151; these read DFN and HLGR. Residues K202, G293, E324, and 350 to 353 contribute to the ATP site; that span reads GGDS.

It belongs to the phosphoglycerate kinase family. Monomer.

It is found in the cytoplasm. The enzyme catalyses (2R)-3-phosphoglycerate + ATP = (2R)-3-phospho-glyceroyl phosphate + ADP. It participates in carbohydrate degradation; glycolysis; pyruvate from D-glyceraldehyde 3-phosphate: step 2/5. The polypeptide is Phosphoglycerate kinase (Exiguobacterium sp. (strain ATCC BAA-1283 / AT1b)).